The sequence spans 225 residues: uncharacterized protein (225 aa).

A Fe2OG dioxygenase domain is found at D114–I219.

Belongs to the iron/ascorbate-dependent oxidoreductase family.

The protein resides in the cytoplasm. Its subcellular location is the nucleus. This is an uncharacterized protein from Schizosaccharomyces pombe (strain 972 / ATCC 24843) (Fission yeast).